A 349-amino-acid polypeptide reads, in one-letter code: Phenylalanine--tRNA ligase alpha subunit (349 aa).

A Mg(2+)-binding site is contributed by E258.

It belongs to the class-II aminoacyl-tRNA synthetase family. Phe-tRNA synthetase alpha subunit type 1 subfamily. Tetramer of two alpha and two beta subunits. It depends on Mg(2+) as a cofactor.

It is found in the cytoplasm. It catalyses the reaction tRNA(Phe) + L-phenylalanine + ATP = L-phenylalanyl-tRNA(Phe) + AMP + diphosphate + H(+). This chain is Phenylalanine--tRNA ligase alpha subunit, found in Rickettsia akari (strain Hartford).